The primary structure comprises 132 residues: Small ribosomal subunit protein uS11 (132 aa).

The disordered stretch occupies residues 113–132 (VTPIPHDGTRAPGGKRGRRV).

Belongs to the universal ribosomal protein uS11 family. Part of the 30S ribosomal subunit.

Located on the platform of the 30S subunit. In Methanocella arvoryzae (strain DSM 22066 / NBRC 105507 / MRE50), this protein is Small ribosomal subunit protein uS11.